The sequence spans 227 residues: Large ribosomal subunit protein uL3 (227 aa).

Positions 146 to 167 (RGPMAHGSKFHRHQGSNGACSS) are disordered.

The protein belongs to the universal ribosomal protein uL3 family. In terms of assembly, part of the 50S ribosomal subunit. Forms a cluster with proteins L14 and L19.

Its function is as follows. One of the primary rRNA binding proteins, it binds directly near the 3'-end of the 23S rRNA, where it nucleates assembly of the 50S subunit. This Agathobacter rectalis (strain ATCC 33656 / DSM 3377 / JCM 17463 / KCTC 5835 / VPI 0990) (Eubacterium rectale) protein is Large ribosomal subunit protein uL3.